The following is a 480-amino-acid chain: F-box/LRR-repeat protein 14 (480 aa).

The region spanning 11-58 (DRQMDELPDHLVWDILSKLHTTDDRNSLSLSCKRFFSLDNEQRYSLRI) is the F-box domain. LRR repeat units follow at residues 61-86 (GLVP…EIIY), 94-119 (GKQV…TLSF), 120-144 (CTFI…KLNF), 145-170 (APRI…HLIR), 171-196 (CLNV…CIKN), 197-222 (CRAI…QFEV), 229-257 (MKVY…SLGN), 258-283 (CIIA…HLDM), 284-309 (CTGV…SLRV), 322-347 (TLRL…KISF), 355-379 (LFSF…SLDH), 380-404 (VCVF…ELVH), 405-429 (CQEV…KLSK), 430-454 (CLGV…VVED), and 455-480 (CPQV…SWMY).

In Arabidopsis thaliana (Mouse-ear cress), this protein is F-box/LRR-repeat protein 14 (FBL14).